The sequence spans 441 residues: Protein C-ets-1 (441 aa).

N6-acetyllysine; alternate occurs at positions 8 and 15. Residues K8 and K15 each participate in a glycyl lysine isopeptide (Lys-Gly) (interchain with G-Cter in SUMO2); alternate cross-link. K15 participates in a covalent cross-link: Glycyl lysine isopeptide (Lys-Gly) (interchain with G-Cter in SUMO); alternate. T38 carries the phosphothreonine; by MAPK modification. The 86-residue stretch at 51–136 folds into the PNT domain; it reads ATFSGFTKEQ…EHLEILQKED (86 aa). Residues 130-243 are activation domain; required for transcription activation; that stretch reads EILQKEDVKP…DNMCMGRASR (114 aa). K138 participates in a covalent cross-link: Glycyl lysine isopeptide (Lys-Gly) (interchain with G-Cter in SUMO2). At Y223 the chain carries Phosphotyrosine. K227 participates in a covalent cross-link: Glycyl lysine isopeptide (Lys-Gly) (interchain with G-Cter in SUMO). 2 positions are modified to phosphoserine: S251 and S254. T265 carries the post-translational modification Phosphothreonine. 4 positions are modified to phosphoserine: S267, S270, S282, and S285. A helix HI-1 region spans residues 304–312; it reads FKDYVRDRA. K305 carries the post-translational modification N6-acetyllysine. The interval 323-330 is helix HI-2; it reads AAALAGYT. A DNA-binding region (ETS) is located at residues 335–415; that stretch reads IQLWQFLLEL…AGKRYVYRFV (81 aa). The tract at residues 418–422 is helix H4; the sequence is LQSLL. The segment at 426–432 is helix H5; that stretch reads PEELHAM.

It belongs to the ETS family. Binds DNA as a homodimer; homodimerization is required for transcription activation. Interacts with MAF and MAFB. Interacts with PAX5; the interaction alters DNA-binding properties. Interacts with DAXX. Interacts with UBE2I. Interacts with SP100; the interaction is direct and modulates ETS1 transcriptional activity. Post-translationally, sumoylated on Lys-15 and Lys-227, preferentially with SUMO2; which inhibits transcriptional activity. In terms of processing, ubiquitinated; which induces proteasomal degradation. Phosphorylation at Ser-251, Ser-282 and Ser-285 by CaMK2/CaMKII in response to calcium signaling decreases affinity for DNA: an increasing number of phosphoserines causes DNA-binding to become progressively weaker.

Its subcellular location is the nucleus. It is found in the cytoplasm. Autoinhibited by a module composed of four alpha helices (HI-1, HI-2, H4, and H5) that flank the DNA-binding ETS domain, reducing the affinity for DNA. Phosphorylation by CaMK2/CaMKII in response to calcium signaling decreases affinity for DNA. Its function is as follows. Transcription factor. Directly controls the expression of cytokine and chemokine genes in a wide variety of different cellular contexts. May control the differentiation, survival and proliferation of lymphoid cells. May also regulate angiogenesis through regulation of expression of genes controlling endothelial cell migration and invasion. The chain is Protein C-ets-1 (Ets1) from Rattus norvegicus (Rat).